We begin with the raw amino-acid sequence, 49 residues long: Large ribosomal subunit protein bL33B (49 aa).

This sequence belongs to the bacterial ribosomal protein bL33 family.

The sequence is that of Large ribosomal subunit protein bL33B from Lactobacillus gasseri (strain ATCC 33323 / DSM 20243 / BCRC 14619 / CIP 102991 / JCM 1131 / KCTC 3163 / NCIMB 11718 / NCTC 13722 / AM63).